A 519-amino-acid polypeptide reads, in one-letter code: Membrane protein insertase YidC (519 aa).

6 helical membrane-spanning segments follow: residues 6–26, 298–318, 324–344, 390–410, 434–454, and 471–491; these read ILFV…FAQP, VDFG…VFFY, YGWA…PLTL, LGGC…FTML, FMQF…IGMF, and IMYI…SGLV.

It belongs to the OXA1/ALB3/YidC family. Type 1 subfamily. In terms of assembly, interacts with the Sec translocase complex via SecD. Specifically interacts with transmembrane segments of nascent integral membrane proteins during membrane integration.

The protein localises to the cell inner membrane. Its function is as follows. Required for the insertion and/or proper folding and/or complex formation of integral membrane proteins into the membrane. Involved in integration of membrane proteins that insert both dependently and independently of the Sec translocase complex, as well as at least some lipoproteins. Aids folding of multispanning membrane proteins. The protein is Membrane protein insertase YidC of Endomicrobium trichonymphae.